A 249-amino-acid chain; its full sequence is Protein YIP5 (249 aa).

5 helical membrane-spanning segments follow: residues Leu-87–Ile-107, Ala-131–Trp-151, Leu-164–Leu-184, Leu-188–Phe-208, and Leu-228–Phe-248.

Belongs to the YIP1 family. In terms of assembly, interacts with the YIP1 family members yip1 and yip4, and several Rab GTPases. The C-terminal cysteines in the Rab GTPase ypt2 are essential for the interaction. Interacts with snx3.

The protein resides in the membrane. Its function is as follows. Possible role in vesicle-mediated transport. May be involved in proper membrane localization of Rab GTPases. The polypeptide is Protein YIP5 (Schizosaccharomyces pombe (strain 972 / ATCC 24843) (Fission yeast)).